The following is an 800-amino-acid chain: Putative antiporter subunit mnhA2 (800 aa).

A run of 20 helical transmembrane segments spans residues 1-21, 33-53, 78-98, 118-138, 167-187, 207-227, 241-261, 273-293, 300-320, 331-351, 387-407, 424-444, 472-492, 527-547, 595-615, 627-647, 651-671, 676-696, 712-732, and 768-788; these read MSLV…LLMS, IALV…PSVA, GLSL…FFYA, LFMF…MYIF, FMIT…LYIM, GLFI…SAQF, TPVS…FLLL, YVYI…ITAL, GILA…VGIG, IASI…NHAI, LVMT…GFLS, FSLI…VFTF, PWLF…IFFV, GFNI…VLAI, IIMT…RIGL, GALE…LIFI, LTMV…FIAM, LALT…VSFS, IIKI…IFIT, and LDTL…YTLL.

The protein belongs to the CPA3 antiporters (TC 2.A.63) subunit A family. May form a heterooligomeric complex that consists of seven subunits: mnhA2, mnhB2, mnhC2, mnhD2, mnhE2, mnhF2 and mnhG2.

The protein resides in the cell membrane. The protein is Putative antiporter subunit mnhA2 (mnhA2) of Staphylococcus aureus (strain USA300).